A 180-amino-acid polypeptide reads, in one-letter code: Calcineurin subunit B type 1 (180 aa).

Gly2 carries N-myristoyl glycine lipidation. 4 consecutive EF-hand domains span residues 25-60 (AELK…ALNP), 62-92 (LERV…LSHK), 94-129 (TKED…MVGT), and 135-170 (QLQQ…QEGI). Ca(2+) contacts are provided by Asp38, Asp40, Ser42, Thr44, Glu49, Asp70, Asn72, Asp74, Glu76, Glu81, Asp107, Asp109, Asp111, and Glu118. The interval 138–143 (QIVDKT) is canA/calcineurin A binding. Ca(2+)-binding residues include Asp148, Asp150, Asp152, Lys154, and Glu159.

This sequence belongs to the calcineurin regulatory subunit family. Forms a complex composed of a calmodulin-dependent catalytic subunit canA (also known as calcineurin A) and a regulatory Ca(2+)-binding subunit cnbA (also known as calcineurin B).

Its function is as follows. Regulatory subunit of calcineurin, a calcium-dependent, calmodulin stimulated protein phosphatase. Confers calcium sensitivity. Important for stalk formation. The chain is Calcineurin subunit B type 1 (cnbA) from Dictyostelium discoideum (Social amoeba).